Reading from the N-terminus, the 227-residue chain is tRNA (guanine-N(1)-)-methyltransferase (227 aa).

Residues G112 and 132-137 contribute to the S-adenosyl-L-methionine site; that span reads IGDFIL.

This sequence belongs to the RNA methyltransferase TrmD family. In terms of assembly, homodimer.

It localises to the cytoplasm. The enzyme catalyses guanosine(37) in tRNA + S-adenosyl-L-methionine = N(1)-methylguanosine(37) in tRNA + S-adenosyl-L-homocysteine + H(+). Its function is as follows. Specifically methylates guanosine-37 in various tRNAs. The sequence is that of tRNA (guanine-N(1)-)-methyltransferase from Sulfurovum sp. (strain NBC37-1).